A 115-amino-acid polypeptide reads, in one-letter code: Peptidyl-tRNA hydrolase (115 aa).

Belongs to the PTH2 family.

It is found in the cytoplasm. The enzyme catalyses an N-acyl-L-alpha-aminoacyl-tRNA + H2O = an N-acyl-L-amino acid + a tRNA + H(+). Functionally, the natural substrate for this enzyme may be peptidyl-tRNAs which drop off the ribosome during protein synthesis. The chain is Peptidyl-tRNA hydrolase from Archaeoglobus fulgidus (strain ATCC 49558 / DSM 4304 / JCM 9628 / NBRC 100126 / VC-16).